Here is a 313-residue protein sequence, read N- to C-terminus: Leucine zipper protein 4 (313 aa).

The tract at residues 1 to 119 (MASFRKLTLS…PLIEQEKCSD (119 aa)) is interaction with DDX39B/UAP56. Disordered regions lie at residues 1 to 238 (MASF…QGDL) and 290 to 313 (QSGR…TITT). Residues 22-40 (KVNFLDMSLDDIIIYKELE) carry the UAP56-binding motif (UBM); required for proper nuclear localization motif. The segment covering 34-60 (IIYKELEGTNAEEEKNKRQNHSKKESP) has biased composition (basic and acidic residues). The arg-rich; required for RNA-binding stretch occupies residues 51–80 (RQNHSKKESPSRQQSKAHRHRHRRGYSRCR). The segment covering 65–77 (SKAHRHRHRRGYS) has biased composition (basic residues). Basic and acidic residues predominate over residues 81-92 (SNSEEGNHDKKP). The segment covering 126–141 (EKNQGQSEGNQHQSEG) has biased composition (polar residues). Residues 142-168 (NPDKSEESQGQPEENHHSERSRNHLER) show a composition bias toward basic and acidic residues. Positions 169–179 (SLSQSDRSQGQ) are enriched in polar residues. Positions 178–236 (GQLKRHHPQYERSHGQYKRSHGQSERSHGHSERSHGHSERSHGHSERSHGHSKRSRSQG) are RS-containing His-rich (RS-H); necessary for nuclear localization. The segment covering 199–226 (GQSERSHGHSERSHGHSERSHGHSERSH) has biased composition (basic and acidic residues). Serine 234 carries the phosphoserine modification. The segment at 238–287 (LVDTQSDLIATQRDLIATQKDLIATQRDLIATQRDLIVTQRDLVATERDL) is leucine-zipper; required for RNA-binding and for its relocalization to the cytoplasm during cell division. The interaction with NXF1 stretch occupies residues 241–313 (TQSDLIATQR…YSTGKNTITT (73 aa)). Positions 304–313 (YSTGKNTITT) are enriched in polar residues.

Interacts with NXF1, NXF2, THOC1, THOC5, DDX39B/UAP56 and SRRT. Expressed specifically in testis. Also expressed in a wide variety of cancer types, but particularly high levels of expression observed in melanoma cells.

The protein localises to the nucleus. It is found in the cytoplasm. Its function is as follows. Export adapter involved in mRNA nuclear export in cancer cells. Binds and enhances the RNA-binding activity of the nuclear RNA export factor NXF1. Can restore mRNA export function in cells compromised by loss of mRNA export adapters. The sequence is that of Leucine zipper protein 4 (LUZP4) from Homo sapiens (Human).